Consider the following 797-residue polypeptide: Striatin-3 (797 aa).

N-acetylmethionine is present on M1. Composition is skewed to gly residues over residues 1 to 13 and 23 to 43; these read MDEL…GGPG and GPGG…GGGP. Positions 1–60 are disordered; it reads MDELAGGGGGGPGMAAPPRQQQGPGGNLGLSPGGNGAAGGGGPPASEGAGPAAGPELSRP. Positions 44 to 56 are enriched in low complexity; sequence PASEGAGPAAGPE. The segment at 71–79 is caveolin-binding; sequence YIQHEWARF. The stretch at 77-136 forms a coiled coil; that stretch reads ARFEMERAHWEVERAELQARIAFLQGERKGQENLKKDLVRRIKMLEYALKQERAKYHKLK. T150 is modified (phosphothreonine). The interval 166 to 183 is calmodulin-binding; it reads QNSQLTWKQGRQLLRQYL. Residues S202, S214, and S229 each carry the phosphoserine modification. 2 disordered regions span residues 224 to 278 and 313 to 338; these read LNGG…KHRM and DGEG…SPTA. Basic and acidic residues predominate over residues 230-241; it reads PKQKGQEIKRSS. Positions 253–265 are enriched in acidic residues; sequence NADDSDEDEENDM. Phosphoserine is present on residues S257 and S335. 6 WD repeats span residues 478–517, 531–570, 584–623, 679–718, 721–760, and 767–797; these read SHFD…PAKK, AHIG…VDPY, GHTD…PCIC, QSNN…MIHS, AHLD…CVQE, and KLDE…KVFV.

Belongs to the WD repeat striatin family. As to quaternary structure, tetramerizes. Part of the core of STRIPAK complexes composed of PP2A catalytic and scaffolding subunits, the striatins (PP2A regulatory subunits), the striatin-associated proteins MOB4, STRIP1 and STRIP2, PDCD10 and members of the STE20 kinases, such as STK24 and STK26. The STRIPAK complex can be extended by adapter proteins such as SLMAP:SIKE1 or CTTNBP2NL. Interacts with CDC42BPB.

The protein localises to the cytoplasm. It localises to the membrane. Functionally, calmodulin-binding scaffolding protein which is the center of the striatin-interacting phosphatase and kinase (STRIPAK) complexes. STRIPAK complexes have critical roles in protein (de)phosphorylation and are regulators of multiple signaling pathways including Hippo, MAPK, nuclear receptor and cytoskeleton remodeling. Different types of STRIPAK complexes are involved in a variety of biological processes such as cell growth, differentiation, apoptosis, metabolism and immune regulation. The chain is Striatin-3 from Homo sapiens (Human).